Reading from the N-terminus, the 681-residue chain is PTS system glucose-specific EIICBA component (681 aa).

In terms of domain architecture, PTS EIIC type-1 spans 3–414 (KKLFGQLQRI…LKYKTPGRED (412 aa)). The next 10 helical transmembrane spans lie at 16–36 (LMLP…GTAM), 73–93 (MIFA…AAIA), 126–146 (ILGI…GALA), 170–190 (FVPI…ALIW), 199–219 (AFST…FGFI), 273–293 (FMQG…LAIY), 303–323 (VVAG…ITEP), 328–348 (FLFV…LSFL), 355–375 (LHLG…GILP), and 383–403 (VIPV…FLIV). Residues 425 to 506 (TELPYAVLEA…QQIMNGQVVE (82 aa)) form the PTS EIIB type-1 domain. Catalysis depends on Cys-447, which acts as the Phosphocysteine intermediate; for EIIB activity. Residues 551–655 (DQVFSEKMMG…SDITPIIVTQ (105 aa)) enclose the PTS EIIA type-1 domain. Residue His-603 is the Tele-phosphohistidine intermediate; for EIIA activity of the active site.

It localises to the cell membrane. It carries out the reaction N(pros)-phospho-L-histidyl-[protein] + D-glucose(out) = D-glucose 6-phosphate(in) + L-histidyl-[protein]. In terms of biological role, the phosphoenolpyruvate-dependent sugar phosphotransferase system (sugar PTS), a major carbohydrate active transport system, catalyzes the phosphorylation of incoming sugar substrates concomitantly with their translocation across the cell membrane. This system is involved in glucose transport. The polypeptide is PTS system glucose-specific EIICBA component (ptsG) (Staphylococcus aureus (strain bovine RF122 / ET3-1)).